A 402-amino-acid chain; its full sequence is Probable tRNA pseudouridine synthase tag-124 (402 aa).

Asp85 acts as the Nucleophile in catalysis. Positions 383-402 (SKKEKMAEKKKNGEESSDKL) are disordered.

This sequence belongs to the tRNA pseudouridine synthase TruA family.

The enzyme catalyses a uridine in tRNA = a pseudouridine in tRNA. Its function is as follows. Formation of pseudouridine at position 38 and 39 in the anticodon stem and loop of transfer RNAs. The sequence is that of Probable tRNA pseudouridine synthase tag-124 (tag-124) from Caenorhabditis elegans.